The following is a 589-amino-acid chain: Probable ATP-dependent RNA helicase DDX59 (589 aa).

Disordered stretches follow at residues 1 to 36 (MFVP…QLEG) and 48 to 98 (KEAV…SKTQ). Residues 12 to 27 (NSNDDLKSCEAKKSKP) show a composition bias toward basic and acidic residues. Lys-26 is covalently cross-linked (Glycyl lysine isopeptide (Lys-Gly) (interchain with G-Cter in SUMO2)). Ser-64 is modified (phosphoserine). Positions 80–91 (GVKDSHPSEEPV) are enriched in basic and acidic residues. Residues 104–133 (GEPVCVVCGRYGEYICDKTDEDVCSLECKA) form an HIT-type zinc finger. Phosphoserine occurs at positions 156 and 160. The Q motif signature appears at 203 to 231 (IDFEHCGFPETLNQNLKKSGYEVPTPIQM). Residues 234-375 (IPVGLLGRDI…DQLLHNPVRI (142 aa)) enclose the Helicase ATP-binding domain. 247–254 (ADTGSGKT) serves as a coordination point for ATP. The short motif at 323–326 (VKAD) is the DEAD box element. A Helicase C-terminal domain is found at 399 to 549 (KKKKLFEILN…ILPPQLLNSP (151 aa)).

This sequence belongs to the DEAD box helicase family. DDX59 subfamily. Interacts (via HIT-type zinc finger) with the RUVBL1/RUVBL2 complex in the presence of ADP.

Its subcellular location is the cytoplasm. The protein resides in the nucleus. It catalyses the reaction ATP + H2O = ADP + phosphate + H(+). This is Probable ATP-dependent RNA helicase DDX59 (Ddx59) from Rattus norvegicus (Rat).